We begin with the raw amino-acid sequence, 329 residues long: Beta-ketoacyl-[acyl-carrier-protein] synthase III (329 aa).

Residues cysteine 123 and histidine 256 contribute to the active site. Residues 257–261 form an ACP-binding region; the sequence is QANIR. Asparagine 286 is a catalytic residue.

It belongs to the thiolase-like superfamily. FabH family. As to quaternary structure, homodimer.

It is found in the cytoplasm. It catalyses the reaction malonyl-[ACP] + acetyl-CoA + H(+) = 3-oxobutanoyl-[ACP] + CO2 + CoA. Its pathway is lipid metabolism; fatty acid biosynthesis. Functionally, catalyzes the condensation reaction of fatty acid synthesis by the addition to an acyl acceptor of two carbons from malonyl-ACP. Catalyzes the first condensation reaction which initiates fatty acid synthesis and may therefore play a role in governing the total rate of fatty acid production. Possesses both acetoacetyl-ACP synthase and acetyl transacylase activities. Its substrate specificity determines the biosynthesis of branched-chain and/or straight-chain of fatty acids. In Burkholderia lata (strain ATCC 17760 / DSM 23089 / LMG 22485 / NCIMB 9086 / R18194 / 383), this protein is Beta-ketoacyl-[acyl-carrier-protein] synthase III.